Consider the following 259-residue polypeptide: MDLLTRTRKINEMLQKTSGQHVNFREMAMTLREAIGSNVFVVSRRGKLLGFSIEEEIENDRMKKMLDERQFPEEYTDGLFKIEDTSANIDVDSEYTAFPVENRDIFKNGLTTIVPIKGGGQRLGTLILSRLNRSFSDDDLILAEYGATVVGMEILHEKTQEIEEEARSKAVVQMAISSLSYSELEAVEHIFEELDGREGLLVASKIADRVGITRSVIVNALRKLESAGVIESRSLGMKGTYIKVLNDKFLLELERMKED.

The interval 1-155 is GAF domain; that stretch reads MDLLTRTRKI…GATVVGMEIL (155 aa). Positions 203 to 222 form a DNA-binding region, H-T-H motif; sequence ASKIADRVGITRSVIVNALR. Ser-215 is modified (phosphoserine).

It belongs to the CodY family.

Its subcellular location is the cytoplasm. Functionally, DNA-binding global transcriptional regulator which is involved in the adaptive response to starvation and acts by directly or indirectly controlling the expression of numerous genes in response to nutrient availability. During rapid exponential growth, CodY is highly active and represses genes whose products allow adaptation to nutrient depletion. In Shouchella clausii (strain KSM-K16) (Alkalihalobacillus clausii), this protein is Global transcriptional regulator CodY.